The following is a 534-amino-acid chain: Monolignol oxidoreductase AtBBE-like 13 (534 aa).

The N-terminal stretch at 1 to 29 is a signal peptide; it reads MAFVLMNNTNAFLVTLLLLSLSYIPLSFS. N-linked (GlcNAc...) asparagine glycosylation is found at asparagine 7 and asparagine 59. An intrachain disulfide couples cysteine 38 to cysteine 102. The segment at residues 117 to 181 is a cross-link (6-(S-cysteinyl)-8alpha-(pros-histidyl)-FAD (His-Cys)); it reads HDYEGLSYVS…KIHGFPAGLC (65 aa).

This sequence belongs to the oxygen-dependent FAD-linked oxidoreductase family. It depends on FAD as a cofactor. Post-translationally, the FAD cofactor is bound via a bicovalent 6-S-cysteinyl, 8alpha-N1-histidyl FAD linkage.

The protein localises to the secreted. It is found in the cell wall. It catalyses the reaction (E)-4-coumaroyl alcohol + A = (E)-4-coumaraldehyde + AH2. The enzyme catalyses (E)-coniferol + A = (E)-coniferaldehyde + AH2. The catalysed reaction is (E)-sinapyl alcohol + A = (E)-sinapaldehyde + AH2. It functions in the pathway phenylpropanoid metabolism. Mediates oxidation of p-hydroxylated derivatives of cinnamyl alcohol (i.e. the monolignols p-coumaryl-, coniferyl-, and sinapyl alcohol) to their corresponding aldehydes. The electron acceptor required for these reactions is not known, but does not seem to be dioxygen. Is much less efficient towards cinnamyl alcohol. The polypeptide is Monolignol oxidoreductase AtBBE-like 13 (Arabidopsis thaliana (Mouse-ear cress)).